The sequence spans 881 residues: Interference hedgehog (881 aa).

A signal peptide spans 1 to 26 (MSSSSSSLLLMMLLLLLLLLTSKLEA). Residues 27–693 (IPVLSSTSPS…NHNETYSLNP (667 aa)) are Extracellular-facing. 4 consecutive Ig-like C2-type domains span residues 37-138 (PGVR…IARL), 128-228 (PLVV…IPSS), 242-330 (PYLL…YINV), and 336-425 (PVIV…LQVN). 3 disulfides stabilise this stretch: C60-C122, C167-C212, and C266-C314. N-linked (GlcNAc...) asparagine glycans are attached at residues N75, N98, N194, N201, N282, N349, N381, N430, and N455. C358 and C407 are oxidised to a cystine. 2 Fibronectin type-III domains span residues 450–558 (PPSA…LQRG) and 566–661 (VPEL…TQRS). Heparin is bound by residues R486, K492, and K494. A glycan (N-linked (GlcNAc...) asparagine) is linked at N517. R532 is a heparin binding site. Residue N548 is glycosylated (N-linked (GlcNAc...) asparagine). Positions 655 to 685 (QGRTQRSKLTTTEQPIQQKGGDRNVNTTPNH) are disordered. Over residues 656-671 (GRTQRSKLTTTEQPIQ) the composition is skewed to polar residues. The N-linked (GlcNAc...) asparagine glycan is linked to N686. The chain crosses the membrane as a helical span at residues 694-714 (LLTGTIGGGALLLLLLIAFSF). The Cytoplasmic portion of the chain corresponds to 715-881 (CLCRRKNRNG…SSGSLNSVGV (167 aa)). Disordered stretches follow at residues 768 to 791 (NPLD…NSPH) and 809 to 881 (PTTY…SVGV). A compositionally biased stretch (polar residues) spans 837 to 855 (PGSNNNLQQIGSETTTTGQ). Residues 865-881 (SSRSENLSSGSLNSVGV) show a composition bias toward low complexity.

Belongs to the immunoglobulin superfamily. IHOG family. In terms of assembly, homodimer. Heterotetramer; 2 iHog chains bind 2 hh chains when facilitated by heparin, heparin is required to promote high-affinity interactions between hh and iHog.

Its subcellular location is the membrane. Functionally, mediates response to the active Hedgehog (Hh) protein signal in embryos, functioning upstream or at the level of patched (ptc). The polypeptide is Interference hedgehog (Drosophila willistoni (Fruit fly)).